The chain runs to 538 residues: Aldehyde dehydrogenase family 2 member B4, mitochondrial (538 aa).

A mitochondrion-targeting transit peptide spans 1-38 (MAARRVSSLLSRSFSASSPLLFRSQGRNCYNGGILRRF). Residue 282 to 287 (GSTDTG) participates in NAD(+) binding. Glu305 acts as the Proton acceptor in catalysis. Cys339 functions as the Nucleophile in the catalytic mechanism.

This sequence belongs to the aldehyde dehydrogenase family. Homotetramer.

It is found in the mitochondrion matrix. It carries out the reaction an aldehyde + NAD(+) + H2O = a carboxylate + NADH + 2 H(+). In terms of biological role, possesses activity on acetaldehyde and glycolaldehyde in vitro. The chain is Aldehyde dehydrogenase family 2 member B4, mitochondrial (ALDH2B4) from Arabidopsis thaliana (Mouse-ear cress).